A 308-amino-acid chain; its full sequence is Thiohydrolase (308 aa).

Belongs to the polyketide transferase af380 family.

It functions in the pathway mycotoxin biosynthesis. Its function is as follows. Thiohydrolase; part of the gene cluster that mediates the biosynthesis of brefeldin A (BFA), a protein transport inhibitor that shows antiviral, antifungal, and antitumor properties. The proposed biosynthesis of BFA involves formation of an acyclic polyketide chain that is differentially tailored throughout the backbone. The highly reducing polyketide synthase Bref-PKS is proposed to synthesize the precisely reduced octaketide precursor, which could then be directly offloaded by the thiohydrolase enzyme Bref-TH followed by a cytochrome P450 monooxygenase-mediated formation of the cyclopentane ring and macrocyclization to afford 7-deoxy BFA. Alternatively, the first ring annulation can also occur on the ACP-tethered intermediate before the thiohydrolase release and lactonization. The C7-hydroxylation by another cytochrome P450 monooxygenase is believed to be the final step in the process to obtain the final structure of BFA. In addition to the HRPKS Bref-PKS and the thiohydrolase Bref-TH, the brefeldin A biosynthesis cluster contains 4 cytochrome p450 monooxygenases (called orf3 to orf6), as well a the probable cluster-specific transcription regulator orf8. In Eupenicillium brefeldianum (Penicillium brefeldianum), this protein is Thiohydrolase.